A 644-amino-acid chain; its full sequence is Translation factor guf1, mitochondrial (644 aa).

The N-terminal 31 residues, 1–31 (MTLRRFSYTFQARILRGLQARPVFVLPSRSH), are a transit peptide targeting the mitochondrion. Residues 51-232 (VNIRNWAIIS…AIIQRVPHPI (182 aa)) form the tr-type G domain. Residues 60-67 (SHIDHGKS), 125-129 (DTPGH), and 179-182 (NKID) contribute to the GTP site.

It belongs to the TRAFAC class translation factor GTPase superfamily. Classic translation factor GTPase family. LepA subfamily.

Its subcellular location is the mitochondrion inner membrane. It catalyses the reaction GTP + H2O = GDP + phosphate + H(+). Promotes mitochondrial protein synthesis. May act as a fidelity factor of the translation reaction, by catalyzing a one-codon backward translocation of tRNAs on improperly translocated ribosomes. Binds to mitochondrial ribosomes in a GTP-dependent manner. This Schizosaccharomyces japonicus (strain yFS275 / FY16936) (Fission yeast) protein is Translation factor guf1, mitochondrial (guf1).